The chain runs to 802 residues: Cullin-4 (802 aa).

Composition is skewed to low complexity over residues 1-33 and 656-676; these read MNFNNNNNNNNNNNNNNNLNNNNNNVNNINNNN and STSSNTSSNTSSNTSSSASGS. Disordered stretches follow at residues 1 to 43 and 656 to 686; these read MNFN…SLAG and STSSNTSSNTSSNTSSSASGSASGGASGGAT. Residues 734–794 enclose the Cullin neddylation domain; sequence DRQYQVDAAI…KEYLCRDPEN (61 aa). Lysine 748 participates in a covalent cross-link: Glycyl lysine isopeptide (Lys-Gly) (interchain with G-Cter in NEDD8).

The protein belongs to the cullin family. Post-translationally, neddylated. Deneddylated via its interaction with the COP9 signalosome (CSN) complex.

Its pathway is protein modification; protein ubiquitination. Its function is as follows. Probable core component of cullin-based SCF-like E3 ubiquitin-protein ligase complexes which mediate the ubiquitination and subsequent proteasomal degradation of target proteins. The E3 ubiquitin-protein ligase activity of the complex is dependent on the neddylation of the cullin subunit. The sequence is that of Cullin-4 (culD) from Dictyostelium discoideum (Social amoeba).